The sequence spans 357 residues: Histidinol-phosphate aminotransferase 1 (357 aa).

Lys-210 bears the N6-(pyridoxal phosphate)lysine mark.

This sequence belongs to the class-II pyridoxal-phosphate-dependent aminotransferase family. Histidinol-phosphate aminotransferase subfamily. In terms of assembly, homodimer. The cofactor is pyridoxal 5'-phosphate.

It carries out the reaction L-histidinol phosphate + 2-oxoglutarate = 3-(imidazol-4-yl)-2-oxopropyl phosphate + L-glutamate. The protein operates within amino-acid biosynthesis; L-histidine biosynthesis; L-histidine from 5-phospho-alpha-D-ribose 1-diphosphate: step 7/9. The protein is Histidinol-phosphate aminotransferase 1 of Methylococcus capsulatus (strain ATCC 33009 / NCIMB 11132 / Bath).